A 130-amino-acid polypeptide reads, in one-letter code: Large ribosomal subunit protein bL19 (130 aa).

It belongs to the bacterial ribosomal protein bL19 family.

Functionally, this protein is located at the 30S-50S ribosomal subunit interface and may play a role in the structure and function of the aminoacyl-tRNA binding site. The protein is Large ribosomal subunit protein bL19 of Gluconobacter oxydans (strain 621H) (Gluconobacter suboxydans).